A 284-amino-acid chain; its full sequence is L-ribulose-5-phosphate 3-epimerase UlaE (284 aa).

It belongs to the L-ribulose-5-phosphate 3-epimerase family.

The enzyme catalyses L-ribulose 5-phosphate = L-xylulose 5-phosphate. Its pathway is cofactor degradation; L-ascorbate degradation; D-xylulose 5-phosphate from L-ascorbate: step 3/4. Catalyzes the isomerization of L-xylulose-5-phosphate to L-ribulose-5-phosphate. Is involved in the anaerobic L-ascorbate utilization. The chain is L-ribulose-5-phosphate 3-epimerase UlaE from Salmonella typhi.